Here is a 485-residue protein sequence, read N- to C-terminus: MSFETLNKSFINGKWTGGESGRTEDILNPYDQSVITTASLATGKQLEDAFDIAQKAQKEWAKSTTEDRKAVLQKARGYLHENRDDIIMMIARETGGTIIKSTIELEQTIAILDEAMTYTGELGGVKEVPSDIEGKTNKIYRLPLGVISSISPFNFPMNLSMRSIAPAIALGNSVVHKPDIQTAISGGTIIAKAFEHAGLPAGVLNVMLTDVKEIGDGMLTNPIPRLISFTGSTAVGRHIGEIAGRAFKRMALELGGNNPFAVLSDADVDRAVDAAIFGKFIHQGQICMIINRIIVHQDVYDEFVEKFTARVKQLPYGDQTDPKTVVGPLINERQIEKALEIIEQAKTDGIELAVEGKRVGNVLTPYVFVGADNNSKIAQTELFAPIATIIKAGSDQEAIDMANDTEYGLSSAVFTSDLEKGEKFALQIDSGMTHVNDQSVNDSPNIAFGGNKASGVGRFGNPWVVEEFTVTKWISIQKQYRKYPF.

An NAD(+)-binding site is contributed by 231-236 (GSTAVG). Residues Glu-253 and Cys-287 contribute to the active site.

It belongs to the aldehyde dehydrogenase family.

It carries out the reaction an aldehyde + NAD(+) + H2O = a carboxylate + NADH + 2 H(+). May contribute to protect cells against stress due to ethanol and related compounds. The protein is Putative aldehyde dehydrogenase AldY (aldY) of Bacillus subtilis (strain 168).